The sequence spans 421 residues: Testin (421 aa).

Positions 92-199 constitute a PET domain; the sequence is MILTNPVAAK…GDVKLPCEMD (108 aa). The tract at residues 133 to 164 is disordered; the sequence is EKQPVAGSEGAQYRKKQLAKQLPAHDQDPSKC. Residues 155–164 show a composition bias toward basic and acidic residues; the sequence is PAHDQDPSKC. 3 consecutive LIM zinc-binding domains span residues 234–297, 299–359, and 362–421; these read YSCY…CDSE, PRCA…NHAV, and QGCH…KMMS.

Belongs to the prickle / espinas / testin family. In terms of assembly, interacts via LIM domain 1 with ZYX. Interacts (via LIM domain 3) with ENAH and VASP. Interacts with ALKBH4, talin, actin, alpha-actinin, GRIP1 and PXN. Interacts (via LIM domain 2) with ACTL7A (via N-terminus). Heterodimer with ACTL7A; the heterodimer interacts with ENAH to form a heterotrimer.

The protein resides in the cytoplasm. Its subcellular location is the cell junction. The protein localises to the focal adhesion. In terms of biological role, scaffold protein that may play a role in cell adhesion, cell spreading and in the reorganization of the actin cytoskeleton. Plays a role in the regulation of cell proliferation. May act as a tumor suppressor. The polypeptide is Testin (TES) (Aotus nancymaae (Ma's night monkey)).